The sequence spans 649 residues: Centrosomal protein of 63 kDa-A (649 aa).

Coiled coils occupy residues 19-185 (DSCE…YQHQ) and 222-556 (EEEL…DAAS). S560 carries the post-translational modification Phosphoserine; by atm and atr. Residues 612–645 (FLQEEEQRSHELLQRLNAHIEELKQESQRTVEHF) adopt a coiled-coil conformation.

The protein belongs to the CEP63 family. Phosphorylation at Ser-560 by atm and atr promotes its delocalization from the centrosome and impairs its ability to promote centrosome dependent spindle assembly.

The protein resides in the cytoplasm. It localises to the cytoskeleton. The protein localises to the microtubule organizing center. It is found in the centrosome. Its subcellular location is the centriole. Its function is as follows. Required for normal spindle assembly. Plays a key role in mother-centriole-dependent centriole duplication. Plays a role in DNA damage response. Following DNA damage, such as double-strand breaks (DSBs), is removed from centrosomes; this leads to the inactivation of spindle assembly and delay in mitotic progression. This chain is Centrosomal protein of 63 kDa-A (cep63-a), found in Xenopus laevis (African clawed frog).